A 98-amino-acid polypeptide reads, in one-letter code: uncharacterized protein (98 aa).

This is an uncharacterized protein from Schizosaccharomyces pombe (strain 972 / ATCC 24843) (Fission yeast).